Reading from the N-terminus, the 213-residue chain is Small ribosomal subunit protein uS5 (213 aa).

Positions 1 to 42 are disordered; sequence MSERDRNGGRSADNNRNDRNERGGRNDRGGRNDRRNNQQDER. Residues 45–108 form the S5 DRBM domain; that stretch reads YIERVVTINR…EEARKNFFRV (64 aa).

The protein belongs to the universal ribosomal protein uS5 family. As to quaternary structure, part of the 30S ribosomal subunit. Contacts proteins S4 and S8.

Its function is as follows. With S4 and S12 plays an important role in translational accuracy. Located at the back of the 30S subunit body where it stabilizes the conformation of the head with respect to the body. This chain is Small ribosomal subunit protein uS5, found in Corynebacterium urealyticum (strain ATCC 43042 / DSM 7109).